Here is a 66-residue protein sequence, read N- to C-terminus: Small ribosomal subunit protein bS21 (66 aa).

It belongs to the bacterial ribosomal protein bS21 family.

The protein is Small ribosomal subunit protein bS21 of Rickettsia peacockii (strain Rustic).